Here is a 538-residue protein sequence, read N- to C-terminus: MAVSSKHIPAPDLHRVRRALLSVSDKTGLIDFAKALHANGVEILSTGGTAKSIAAAGIPVKDVSEITGFPEIMDGRVKTLHPAVHGGLLAVRNDPEHVAAIEEHGIGGIDLAVINLYPFEEVRFKGGDYDTTVENIDIGGPAMIRASAKNHAYVATVVDPADYADVVAELEKHSGSLPLAFRKKLAAKAFSRTAAYDAAISNWFAEAIDEETPTYRAVAGKLHSVMRYGENPHQTAGFYLTGEKRPGVATATQLQGKQLSYNNINDTDAAFELVAEFDPARTAAVAIIKHANPCGVAEASTIKEAYLKALACDPVSAFGGIVALNRTLDEEAAEEIVKTFTEVIIAPDATEGAQAIVAAKKNLRLLVTGGLPDPRAKGIAAKTVAGGLLVQSRDNGVVDDLDLKVVTKRAPTEAELNDLKFAFRVGKHVKSNAIVYVKDGATVGIGAGQMSRVDSARIAARKAEDAAEAAGLAAPLTKGCVVASDAFFPFADGLLSAVEAGATAVIQPGGSMRDDEVIAAADEHGIAMVMTGMRHFRH.

Residues 6–158 (KHIPAPDLHR…KNHAYVATVV (153 aa)) enclose the MGS-like domain.

It belongs to the PurH family.

It carries out the reaction (6R)-10-formyltetrahydrofolate + 5-amino-1-(5-phospho-beta-D-ribosyl)imidazole-4-carboxamide = 5-formamido-1-(5-phospho-D-ribosyl)imidazole-4-carboxamide + (6S)-5,6,7,8-tetrahydrofolate. The enzyme catalyses IMP + H2O = 5-formamido-1-(5-phospho-D-ribosyl)imidazole-4-carboxamide. The protein operates within purine metabolism; IMP biosynthesis via de novo pathway; 5-formamido-1-(5-phospho-D-ribosyl)imidazole-4-carboxamide from 5-amino-1-(5-phospho-D-ribosyl)imidazole-4-carboxamide (10-formyl THF route): step 1/1. It functions in the pathway purine metabolism; IMP biosynthesis via de novo pathway; IMP from 5-formamido-1-(5-phospho-D-ribosyl)imidazole-4-carboxamide: step 1/1. This is Bifunctional purine biosynthesis protein PurH from Brucella ovis (strain ATCC 25840 / 63/290 / NCTC 10512).